The following is a 188-amino-acid chain: Elongation factor P (188 aa).

Belongs to the elongation factor P family.

The protein localises to the cytoplasm. Its pathway is protein biosynthesis; polypeptide chain elongation. Functionally, involved in peptide bond synthesis. Stimulates efficient translation and peptide-bond synthesis on native or reconstituted 70S ribosomes in vitro. Probably functions indirectly by altering the affinity of the ribosome for aminoacyl-tRNA, thus increasing their reactivity as acceptors for peptidyl transferase. In Rhodospirillum centenum (strain ATCC 51521 / SW), this protein is Elongation factor P.